The following is a 348-amino-acid chain: Gamma-glutamyl hydrolase 1 (348 aa).

Residues 1–23 form the signal peptide; that stretch reads MIDNNCLYKEELNRNSYSGLAKE. Positions 46 to 342 constitute a Gamma-glutamyl hydrolase domain; that stretch reads SPDPNLNYRP…RGYDEVYIFT (297 aa). Residue cysteine 156 is the Nucleophile of the active site. The active site involves histidine 269.

The protein belongs to the peptidase C26 family. Highly expressed in roots and at lower levels in leaves, stems and siliques.

The protein localises to the vacuole. Its subcellular location is the secreted. It is found in the extracellular space. The protein resides in the cell wall. It carries out the reaction (6S)-5,6,7,8-tetrahydrofolyl-(gamma-L-Glu)(n) + (n-1) H2O = (6S)-5,6,7,8-tetrahydrofolate + (n-1) L-glutamate. Its function is as follows. Cleaves the polyglutamate sidechains of folate polyglutamates in the vacuole. Is important for polyglutamyl tail length determination before vacuolar exit. Plays a role in folate stability and intracellular folate content. In Arabidopsis thaliana (Mouse-ear cress), this protein is Gamma-glutamyl hydrolase 1 (GGH1).